The primary structure comprises 83 residues: Colicin-E5 immunity protein in ColE9 (83 aa).

This chain is Colicin-E5 immunity protein in ColE9, found in Escherichia coli.